The chain runs to 333 residues: Calcium uniporter protein, mitochondrial (333 aa).

The N-terminal 22 residues, 1–22 (MRNGRCLVTPFVTAQRLANLRN), are a transit peptide targeting the mitochondrion. At 23–214 (TLWNRQQIAF…QECEAHTDRV (192 aa)) the chain is on the mitochondrial matrix side. Residues 180–193 (KKLLLQLENAETLL) are a coiled coil. Positions 195–213 (PLHDAKRKIEQECEAHTDR) are outer juxtamembrane helix (OJMH). Residues 215 to 234 (MWAGFAAMGVQTGLFARLTW) form a helical membrane-spanning segment. The Mitochondrial intermembrane portion of the chain corresponds to 235-243 (WEYSWDIME). Residues 239–247 (WDIMEPVTY) carry the Selectivity filter motif. Residue E243 participates in Ca(2+) binding. Residues 244 to 260 (PVTYFATYSTVCATFGY) form a helical membrane-spanning segment. Residues 261–333 (YLYTQQSFEY…SYLSNLEAEK (73 aa)) are Mitochondrial matrix-facing. Positions 262 to 271 (LYTQQSFEYP) are inner juxtamembrane helix (IJMH). Positions 289–316 (QNFDIEKYNRLVTEVDELRNQLKRMRDP) form a coiled coil.

Belongs to the MCU (TC 1.A.77) family.

It is found in the mitochondrion inner membrane. The enzyme catalyses Ca(2+)(in) = Ca(2+)(out). With respect to regulation, inhibited by ruthenium red or its derivative Ru360; possibly by obstructing the pore. In terms of biological role, mitochondrial inner membrane calcium uniporter that mediates calcium uptake into mitochondria. Constitutes a pore-forming and calcium-conducting subunit. Mitochondrial calcium homeostasis plays key roles in cellular physiology and regulates cell bioenergetics, cytoplasmic calcium signals and activation of cell death pathways. Required for rapid mitochondrial calcium uptake and mitochondrial reactive oxygen species (mtROS) production after wounding. In addition, together with mitochondrial calcium regulator micu-1, required for mitochondrial calcium uptake following axon injury in PLM touch receptor neurons. This Caenorhabditis elegans protein is Calcium uniporter protein, mitochondrial.